The following is a 142-amino-acid chain: Large ribosomal subunit protein uL11 (142 aa).

It belongs to the universal ribosomal protein uL11 family. In terms of assembly, part of the ribosomal stalk of the 50S ribosomal subunit. Interacts with L10 and the large rRNA to form the base of the stalk. L10 forms an elongated spine to which L12 dimers bind in a sequential fashion forming a multimeric L10(L12)X complex. In terms of processing, one or more lysine residues are methylated.

Forms part of the ribosomal stalk which helps the ribosome interact with GTP-bound translation factors. In Mesoplasma florum (strain ATCC 33453 / NBRC 100688 / NCTC 11704 / L1) (Acholeplasma florum), this protein is Large ribosomal subunit protein uL11.